A 573-amino-acid polypeptide reads, in one-letter code: 60 kDa heat shock protein, mitochondrial (573 aa).

The transit peptide at 1–26 (MLRLPTVFRQMRPVSRVLAPHLTRAY) directs the protein to the mitochondrion. An N6-succinyllysine modification is found at K31. A phosphoserine mark is found at S67 and S70. K75 contacts ATP. Position 75 is an N6-acetyllysine (K75). Position 82 is an N6-acetyllysine; alternate (K82). At K82 the chain carries N6-succinyllysine; alternate. At K87 the chain carries N6-acetyllysine. Phosphotyrosine is present on Y90. At K91 the chain carries N6-acetyllysine. Position 111-115 (111-115 (DGTTT)) interacts with ATP. Position 125 is an N6-acetyllysine; alternate (K125). Position 125 is an N6-succinyllysine; alternate (K125). K130 is modified (N6-acetyllysine). The residue at position 133 (K133) is an N6-acetyllysine; alternate. At K133 the chain carries N6-succinyllysine; alternate. N6-malonyllysine; alternate is present on K133. K156 carries the post-translational modification N6-acetyllysine. K191, K202, K205, K218, and K236 each carry N6-acetyllysine; alternate. N6-succinyllysine; alternate occurs at positions 191, 202, 205, 218, and 236. An N6-acetyllysine modification is found at K249. K250 is subject to N6-acetyllysine; alternate. The residue at position 250 (K250) is an N6-succinyllysine; alternate. An N6-acetyllysine mark is found at K269 and K292. K301 bears the N6-succinyllysine mark. Residue K314 is modified to N6-acetyllysine. K352 carries the N6-acetyllysine; alternate modification. An N6-succinyllysine; alternate modification is found at K352. An N6-acetyllysine mark is found at K359 and K389. K396 is subject to N6-acetyllysine; alternate. The residue at position 396 (K396) is an N6-succinyllysine; alternate. S410 carries the post-translational modification Phosphoserine. G440 serves as a coordination point for ATP. At K469 the chain carries N6-acetyllysine. Residue K481 is modified to N6-acetyllysine; alternate. K481 carries the N6-succinyllysine; alternate modification. Position 488 is a phosphoserine (S488). D520 is a binding site for ATP. K551 participates in a covalent cross-link: Glycyl lysine isopeptide (Lys-Gly) (interchain with G-Cter in SUMO2).

This sequence belongs to the chaperonin (HSP60) family. As to quaternary structure, homoheptamer arranged in a ring structure. The functional units of these chaperonins consist of heptameric rings of the large subunit Hsp60, which function as a back-to-back double ring. Interacts with 2 heptameric Hsp10 rings to form the symmetrical football complex. Interacts with HRAS. Interacts with ATAD3A. Interacts with ETFBKMT and EEF1AKMT3. Interacts with MFHAS1. In terms of assembly, (Microbial infection) Interacts with hepatitis B virus/HBV protein X. (Microbial infection) Interacts with HTLV-1 protein p40tax.

It localises to the mitochondrion matrix. It carries out the reaction ATP + H2O + a folded polypeptide = ADP + phosphate + an unfolded polypeptide.. In terms of biological role, chaperonin implicated in mitochondrial protein import and macromolecular assembly. Together with Hsp10, facilitates the correct folding of imported proteins. May also prevent misfolding and promote the refolding and proper assembly of unfolded polypeptides generated under stress conditions in the mitochondrial matrix. The functional units of these chaperonins consist of heptameric rings of the large subunit Hsp60, which function as a back-to-back double ring. In a cyclic reaction, Hsp60 ring complexes bind one unfolded substrate protein per ring, followed by the binding of ATP and association with 2 heptameric rings of the co-chaperonin Hsp10. This leads to sequestration of the substrate protein in the inner cavity of Hsp60 where, for a certain period of time, it can fold undisturbed by other cell components. Synchronous hydrolysis of ATP in all Hsp60 subunits results in the dissociation of the chaperonin rings and the release of ADP and the folded substrate protein. This chain is 60 kDa heat shock protein, mitochondrial (HSPD1), found in Homo sapiens (Human).